A 148-amino-acid chain; its full sequence is Large ribosomal subunit protein uL15 (148 aa).

Residues 1 to 10 are compositionally biased toward basic and acidic residues; that stretch reads MQLHNLEYKK. Residues 1 to 42 form a disordered region; sequence MQLHNLEYKKGSRNHKEKRVGRGHGSGLGKTSGRGQDGQKAR. Residues 11–22 are compositionally biased toward basic residues; the sequence is GSRNHKEKRVGR. The segment covering 23 to 36 has biased composition (gly residues); sequence GHGSGLGKTSGRGQ.

It belongs to the universal ribosomal protein uL15 family. Part of the 50S ribosomal subunit.

Binds to the 23S rRNA. In Ureaplasma urealyticum serovar 10 (strain ATCC 33699 / Western), this protein is Large ribosomal subunit protein uL15.